Reading from the N-terminus, the 603-residue chain is Pyruvate oxidase (603 aa).

Positions Met-1–Thr-191 are core. Positions Pro-192–Ser-342 are FAD-binding. The segment at Thr-343 to Phe-603 is thiamine pyrophosphate binding. Residues Asp-447, Asn-474, and Gln-476 each contribute to the Mg(2+) site.

It belongs to the TPP enzyme family. In terms of assembly, homotetramer. FAD serves as cofactor. Requires Mg(2+) as cofactor. It depends on thiamine diphosphate as a cofactor.

The catalysed reaction is pyruvate + phosphate + O2 + H(+) = acetyl phosphate + H2O2 + CO2. Its function is as follows. Important for the aerobic growth. Decarboxylates pyruvate in four steps. The energy released is partially stored in acetyl phosphate. The protein is Pyruvate oxidase (pox5) of Lactiplantibacillus plantarum (strain ATCC BAA-793 / NCIMB 8826 / WCFS1) (Lactobacillus plantarum).